The chain runs to 102 residues: Large ribosomal subunit protein bL21 (102 aa).

Belongs to the bacterial ribosomal protein bL21 family. In terms of assembly, part of the 50S ribosomal subunit. Contacts protein L20.

In terms of biological role, this protein binds to 23S rRNA in the presence of protein L20. The chain is Large ribosomal subunit protein bL21 from Syntrophotalea carbinolica (strain DSM 2380 / NBRC 103641 / GraBd1) (Pelobacter carbinolicus).